The chain runs to 401 residues: Serine--glyoxylate aminotransferase (401 aa).

The residue at position 1 (methionine 1) is an N-acetylmethionine. Pyridoxal 5'-phosphate-binding positions include 68-70 (TGT), threonine 148, and 200-201 (QK). Lysine 201 lines the 3-hydroxypyruvate pocket. Lysine 201 carries the N6-(pyridoxal phosphate)lysine modification. Serine 204 carries the post-translational modification Phosphoserine. Arginine 347 lines the 3-hydroxypyruvate pocket. The Microbody targeting signal signature appears at 399 to 401 (SRI).

It belongs to the class-V pyridoxal-phosphate-dependent aminotransferase family. As to quaternary structure, forms homodimers. Interacts with RABGAP22. Pyridoxal 5'-phosphate serves as cofactor. As to expression, widely expressed. Preferentially expressed in green, leafy tissues, root cortex and epidermis, developing siliques and dry seeds.

It is found in the peroxisome. The catalysed reaction is glyoxylate + L-serine = 3-hydroxypyruvate + glycine. It catalyses the reaction glyoxylate + L-alanine = glycine + pyruvate. The enzyme catalyses L-serine + pyruvate = 3-hydroxypyruvate + L-alanine. It carries out the reaction 3-hydroxypyruvate + L-asparagine = 2-oxosuccinamate + L-serine. The catalysed reaction is L-asparagine + glyoxylate = 2-oxosuccinamate + glycine. It catalyses the reaction L-asparagine + pyruvate = 2-oxosuccinamate + L-alanine. Its activity is regulated as follows. Inhibited by aminooxyacetate and beta-chloro-L-alanine, but not by p-hydroxymercuribenzoate. In terms of biological role, photorespiratory enzyme that catalyzes transamination reactions with multiple substrates, including asparagine. Functions exclusively as a catabolic enzyme in Asn metabolism. Involved in root development during seedling establishment after seed germination by regulating serine homeostasis and acetate conversion. This chain is Serine--glyoxylate aminotransferase, found in Arabidopsis thaliana (Mouse-ear cress).